We begin with the raw amino-acid sequence, 532 residues long: Tyrosine-protein kinase Src-1 (532 aa).

The interval 1-52 (MGATKSKPREGGPRSRSLDIVEGSHQPFTSLSASQTPNKSLDSHRPPAQPFG) is disordered. The N-myristoyl glycine moiety is linked to residue G2. Over residues 7 to 19 (KPREGGPRSRSLD) the composition is skewed to basic and acidic residues. The span at 26-40 (QPFTSLSASQTPNKS) shows a compositional bias: polar residues. The SH3 domain maps to 80–141 (GGVTTFVALY…PSNYVAPSDS (62 aa)). One can recognise an SH2 domain in the interval 147–244 (WYLGKITRRE…GLCHRLTTVC (98 aa)). The Protein kinase domain occupies 266–519 (LRLELKLGQG…YLQAFLEDYF (254 aa)). Residues 272–280 (LGQGCFGEV) and K294 each bind ATP. The active-site Proton acceptor is the D385. Phosphotyrosine; by autocatalysis is present on Y415.

Belongs to the protein kinase superfamily. Tyr protein kinase family. SRC subfamily.

The protein localises to the cell membrane. The catalysed reaction is L-tyrosyl-[protein] + ATP = O-phospho-L-tyrosyl-[protein] + ADP + H(+). The chain is Tyrosine-protein kinase Src-1 (src-a) from Xenopus laevis (African clawed frog).